The chain runs to 255 residues: Imidazole glycerol phosphate synthase subunit HisF (255 aa).

Residues Asp-12 and Asp-131 contribute to the active site.

Belongs to the HisA/HisF family. Heterodimer of HisH and HisF.

It is found in the cytoplasm. The enzyme catalyses 5-[(5-phospho-1-deoxy-D-ribulos-1-ylimino)methylamino]-1-(5-phospho-beta-D-ribosyl)imidazole-4-carboxamide + L-glutamine = D-erythro-1-(imidazol-4-yl)glycerol 3-phosphate + 5-amino-1-(5-phospho-beta-D-ribosyl)imidazole-4-carboxamide + L-glutamate + H(+). The protein operates within amino-acid biosynthesis; L-histidine biosynthesis; L-histidine from 5-phospho-alpha-D-ribose 1-diphosphate: step 5/9. In terms of biological role, IGPS catalyzes the conversion of PRFAR and glutamine to IGP, AICAR and glutamate. The HisF subunit catalyzes the cyclization activity that produces IGP and AICAR from PRFAR using the ammonia provided by the HisH subunit. In Salinispora tropica (strain ATCC BAA-916 / DSM 44818 / JCM 13857 / NBRC 105044 / CNB-440), this protein is Imidazole glycerol phosphate synthase subunit HisF.